The primary structure comprises 333 residues: Protoheme IX farnesyltransferase (333 aa).

The next 7 helical transmembrane spans lie at 63–83 (LACTLGGGALAAAAAGVLNCI), 109–129 (AAFIGAISCTLAAAALLVSGV), 132–152 (LAAGLSLLGLCSYVLLYTAIL), 160–180 (IVIGGVAGAIPPLVGAAAASG), 188–208 (WLFALVMLWTPAHFWALALLL), 245–265 (GFGVWALPEGGLLYGLLLIPF), and 292–312 (WSIFYMFGICLLLVVSRLPMA).

Belongs to the UbiA prenyltransferase family. Protoheme IX farnesyltransferase subfamily.

The protein resides in the cell inner membrane. It carries out the reaction heme b + (2E,6E)-farnesyl diphosphate + H2O = Fe(II)-heme o + diphosphate. It participates in porphyrin-containing compound metabolism; heme O biosynthesis; heme O from protoheme: step 1/1. Converts heme B (protoheme IX) to heme O by substitution of the vinyl group on carbon 2 of heme B porphyrin ring with a hydroxyethyl farnesyl side group. The polypeptide is Protoheme IX farnesyltransferase (Prochlorococcus marinus (strain MIT 9303)).